The sequence spans 503 residues: uncharacterized protein (503 aa).

ABC transporter domains follow at residues 8–249 (VPVA…LGRD) and 261–499 (IVDQ…MSAI). 43-50 (GKNGAGKS) is a binding site for ATP.

It belongs to the ABC transporter superfamily.

In terms of biological role, probably part of a binding-protein-dependent transport system YphDEF. Probably responsible for energy coupling to the transport system. This is an uncharacterized protein from Escherichia coli (strain K12).